A 145-amino-acid chain; its full sequence is Ribosomal RNA large subunit methyltransferase H (145 aa).

S-adenosyl-L-methionine-binding positions include Leu64, Gly93, and 112–117 (LSALTF).

The protein belongs to the RNA methyltransferase RlmH family. As to quaternary structure, homodimer.

It localises to the cytoplasm. The catalysed reaction is pseudouridine(1915) in 23S rRNA + S-adenosyl-L-methionine = N(3)-methylpseudouridine(1915) in 23S rRNA + S-adenosyl-L-homocysteine + H(+). Functionally, specifically methylates the pseudouridine at position 1915 (m3Psi1915) in 23S rRNA. This Prochlorococcus marinus (strain SARG / CCMP1375 / SS120) protein is Ribosomal RNA large subunit methyltransferase H.